A 230-amino-acid chain; its full sequence is Ureidoacrylate amidohydrolase RutB (230 aa).

The Proton acceptor role is filled by Asp24. Lys133 is a catalytic residue. Cys166 serves as the catalytic Nucleophile.

It belongs to the isochorismatase family. RutB subfamily.

The enzyme catalyses (Z)-3-ureidoacrylate + H2O + H(+) = (Z)-3-aminoacrylate + NH4(+) + CO2. It catalyses the reaction (Z)-3-ureidoacrylate + H2O = (Z)-3-aminoacrylate + carbamate + H(+). It carries out the reaction (Z)-2-methylureidoacrylate + H2O + H(+) = (Z)-2-methylaminoacrylate + NH4(+) + CO2. In terms of biological role, hydrolyzes ureidoacrylate to form aminoacrylate and carbamate. The carbamate hydrolyzes spontaneously, thereby releasing one of the nitrogen atoms of the pyrimidine ring as ammonia and one of its carbon atoms as CO2. The sequence is that of Ureidoacrylate amidohydrolase RutB from Escherichia coli O111:H- (strain 11128 / EHEC).